A 244-amino-acid chain; its full sequence is 5-oxoprolinase subunit A (244 aa).

Belongs to the LamB/PxpA family. As to quaternary structure, forms a complex composed of PxpA, PxpB and PxpC.

The catalysed reaction is 5-oxo-L-proline + ATP + 2 H2O = L-glutamate + ADP + phosphate + H(+). Catalyzes the cleavage of 5-oxoproline to form L-glutamate coupled to the hydrolysis of ATP to ADP and inorganic phosphate. In Shigella flexneri, this protein is 5-oxoprolinase subunit A.